We begin with the raw amino-acid sequence, 292 residues long: 1,4-dihydroxy-2-naphthoate octaprenyltransferase (292 aa).

The next 6 membrane-spanning stretches (helical) occupy residues 35 to 55 (AAVWWKALLALAVAVALVIGV), 101 to 121 (ALAGLVLALLSAPWLIAVGAI), 137 to 157 (GYAGFGELAVFVFFGPVAVLG), 166 to 186 (VDWVGLAQAVATGALSCSVLV), 220 to 240 (LLAVAGVLTFVLMLATPWCVV), and 271 to 291 (TGLAMLVWALAVAGALAFGQL).

It belongs to the MenA family. Type 1 subfamily. Mg(2+) is required as a cofactor.

The protein resides in the cell membrane. The enzyme catalyses an all-trans-polyprenyl diphosphate + 1,4-dihydroxy-2-naphthoate + H(+) = a 2-demethylmenaquinol + CO2 + diphosphate. The protein operates within quinol/quinone metabolism; menaquinone biosynthesis; menaquinol from 1,4-dihydroxy-2-naphthoate: step 1/2. With respect to regulation, activity is abolished by EDTA. Inhibited by Ro 48-8071, which is non-competitive with regard to DHNA and competitive with regard to the isoprenyldiphosphate substrate. Functionally, conversion of 1,4-dihydroxy-2-naphthoate (DHNA) to demethylmenaquinone (DMK). Can use a variety of allylic isoprenyl diphosphates as substrates but has a requirement for at least three isoprene units. This chain is 1,4-dihydroxy-2-naphthoate octaprenyltransferase, found in Mycobacterium tuberculosis (strain ATCC 25618 / H37Rv).